Consider the following 338-residue polypeptide: mRNA decay activator protein ZFP36L1 (338 aa).

Residues 1-111 (MTTTLVSATI…QKQPGSGQVN (111 aa)) form a necessary and sufficient for the association with mRNA decay enzymes and mRNA decay activation region. At serine 54 the chain carries Phosphoserine; by MAPKAPK2. The disordered stretch occupies residues 71–113 (LKGEPAPSLSSRDSRFRDRSFSEGGERLLPTQKQPGSGQVNSS). Over residues 82–96 (RDSRFRDRSFSEGGE) the composition is skewed to basic and acidic residues. Residue serine 90 is modified to Phosphoserine; by PKB/AKT1. Serine 92 carries the phosphoserine; by PKB/AKT1 and MAPKAPK2 modification. The segment covering 101–113 (TQKQPGSGQVNSS) has biased composition (polar residues). C3H1-type zinc fingers lie at residues 114–142 (RYKT…HGIH) and 152–180 (KYKT…HNAE). The interval 185 to 338 (LAGGRDLSAD…IFSRLSISDD (154 aa)) is necessary for mRNA decay activation. A Phosphoserine; by PKB/AKT1 and MAPKAPK2 modification is found at serine 203. Residues 273-338 (SPTTFLFRPM…IFSRLSISDD (66 aa)) form a disordered region. Residues 305-318 (YLSSSSSSHSGSDS) are compositionally biased toward low complexity. Serine 318 is modified (phosphoserine). Phosphoserine; by RPS6KA1 is present on serine 334.

Associates with the cytoplasmic CCR4-NOT deadenylase and RNA exosome complexes to trigger ARE-containing mRNA deadenylation and decay processes. Interacts with CNOT1. Interacts (via N-terminus) with CNOT6. Interacts with CNOT7; this interaction is inhibited in response to phorbol 12-myristate 13-acetate (PMA) treatment in a p38 MAPK-dependent manner. Interacts with DCP1A. Interacts (via N-terminus) with DCP2. Interacts (via N-terminus) with EXOSC2. Interacts with XRN1. Interacts (via phosphorylated form) with YWHAB; this interaction occurs in a protein kinase AKT1-dependent manner. Interacts (via phosphorylated form) with YWHAZ; this interaction occurs in a p38 MAPK- and AKT-signaling pathways. Phosphorylated. Phosphorylated by RPS6KA1 at Ser-334 upon phorbol 12-myristate 13-acetate (PMA) treatment; this phosphorylation results in dissociation of the CCR4-NOT deadenylase complex and induces p38 MAPK-mediated stabilization of the low-density lipoprotein receptor LDLR mRNA. Phosphorylated by protein kinase AKT1 at Ser-92 and Ser-203 in response to insulin; these phosphorylations stabilize ZFP36L1, increase the association with 14-3-3 proteins and mediate ARE-containing mRNA stabilization. AKT1-mediated phosphorylation at Ser-92 does not impair ARE-containing RNA-binding. Phosphorylated at Ser-54, Ser-92 and Ser-203 by MAPKAPK2; these phosphorylations increase the association with 14-3-3 proteins and mediate ARE-containing mRNA stabilization in a protein kinase AKT1-independent manner. MAPKAPK2-mediated phosphorylations at Ser-54, Ser-92 and Ser-203 do not impair ARE-containing RNA-binding. Phosphorylations increase the association with 14-3-3 proteins and mediate ARE-containing mRNA stabilization during early adipogenesis in a p38 MAPK- and AKT-dependent manner. Post-translationally, ubiquitinated. Ubiquitination leads to proteasomal degradation, a process inhibited by phosphorylations at Ser-90, Ser-92 and Ser-203. Expressed in preadipocytes and adipocytes. Expressed in the proximal and distal tubules in the renal cortex (at protein level). Expressed in ovary, heart, kidney, lung, spleen and thymus. Weakly expressed in brain, liver and testis. Expressed in osteoblasts. Expressed in embryonic stem cells (ESCs). Expressed through B lymphocyte development.

It is found in the nucleus. It localises to the cytoplasm. The protein localises to the cytoplasmic granule. Its subcellular location is the P-body. Zinc-finger RNA-binding protein that destabilizes several cytoplasmic AU-rich element (ARE)-containing mRNA transcripts by promoting their poly(A) tail removal or deadenylation, and hence provide a mechanism for attenuating protein synthesis. Acts as a 3'-untranslated region (UTR) ARE mRNA-binding adapter protein to communicate signaling events to the mRNA decay machinery. Functions by recruiting the CCR4-NOT deadenylating complex and components of the cytoplasmic RNA decay machinery to the bound ARE-containing mRNAs, and hence promotes ARE-mediated mRNA deadenylation and decay processes. Also induces the degradation of ARE-containing mRNAs even in absence of poly(A) tail. Binds to 3'-UTR ARE of numerous mRNAs. Positively regulates early adipogenesis by promoting ARE-mediated mRNA decay of immediate early genes (IEGs). Promotes ARE-mediated mRNA decay of mineralocorticoid receptor NR3C2 mRNA in response to hypertonic stress. Negatively regulates hematopoietic/erythroid cell differentiation by promoting ARE-mediated mRNA decay of the transcription factor STAT5B mRNA. Positively regulates monocyte/macrophage cell differentiation by promoting ARE-mediated mRNA decay of the cyclin-dependent kinase CDK6 mRNA. Promotes degradation of ARE-containing pluripotency-associated mRNAs in embryonic stem cells (ESCs), such as NANOG, through a fibroblast growth factor (FGF)-induced MAPK-dependent signaling pathway, and hence attenuates ESC self-renewal and positively regulates mesendoderm differentiation. May play a role in mediating pro-apoptotic effects in malignant B-cells by promoting ARE-mediated mRNA decay of BCL2 mRNA. In association with ZFP36L2 maintains quiescence on developing B lymphocytes by promoting ARE-mediated decay of several mRNAs encoding cell cycle regulators that help B cells progress through the cell cycle, and hence ensuring accurate variable-diversity-joining (VDJ) recombination and functional immune cell formation. Together with ZFP36L2 is also necessary for thymocyte development and prevention of T-cell acute lymphoblastic leukemia (T-ALL) transformation by promoting ARE-mediated mRNA decay of the oncogenic transcription factor NOTCH1 mRNA. Involved in the delivery of target ARE-mRNAs to processing bodies (PBs). In addition to its cytosolic mRNA-decay function, plays a role in the regulation of nuclear mRNA 3'-end processing; modulates mRNA 3'-end maturation efficiency of the DLL4 mRNA through binding with an ARE embedded in a weak noncanonical polyadenylation (poly(A)) signal in endothelial cells. Also involved in the regulation of stress granule (SG) and P-body (PB) formation and fusion. Plays a role in vasculogenesis and endocardial development. Involved in the regulation of keratinocyte proliferation, differentiation and apoptosis. Plays a role in myoblast cell differentiation. In Mus musculus (Mouse), this protein is mRNA decay activator protein ZFP36L1.